The sequence spans 157 residues: SsrA-binding protein (157 aa).

It belongs to the SmpB family.

It is found in the cytoplasm. Functionally, required for rescue of stalled ribosomes mediated by trans-translation. Binds to transfer-messenger RNA (tmRNA), required for stable association of tmRNA with ribosomes. tmRNA and SmpB together mimic tRNA shape, replacing the anticodon stem-loop with SmpB. tmRNA is encoded by the ssrA gene; the 2 termini fold to resemble tRNA(Ala) and it encodes a 'tag peptide', a short internal open reading frame. During trans-translation Ala-aminoacylated tmRNA acts like a tRNA, entering the A-site of stalled ribosomes, displacing the stalled mRNA. The ribosome then switches to translate the ORF on the tmRNA; the nascent peptide is terminated with the 'tag peptide' encoded by the tmRNA and targeted for degradation. The ribosome is freed to recommence translation, which seems to be the essential function of trans-translation. This chain is SsrA-binding protein, found in Chlorobaculum tepidum (strain ATCC 49652 / DSM 12025 / NBRC 103806 / TLS) (Chlorobium tepidum).